The primary structure comprises 437 residues: Interactor protein for cytohesin exchange factors 1 (437 aa).

In terms of domain architecture, PH spans 41–140 (HADCQGWLYK…WLNKLGSAVI (100 aa)). 2 disordered regions span residues 143–225 (ESTT…PDTV) and 273–307 (LSSD…ETKV). Acidic residues predominate over residues 151 to 162 (CYSESEQEDPEI). The segment covering 172 to 200 (ASQTQSLTAQQASSSSPSLSGTSYSFSSL) has biased composition (low complexity). Residues 201-214 (ENTVKTPSSFPSSL) are compositionally biased toward polar residues. Residues 273–283 (LSSDDTSSLSS) show a composition bias toward low complexity. 2 CRAC domain regions span residues 315–320 (KLYKSL) and 339–348 (LRKSFVKRCK). Residues 389–437 (KYREWKVMNTLLIQDIYQQQRASPAPDDTDDTPQELKKSPSSPSVENSI) are required for interaction with CYTH2. The tract at residues 406-437 (QQQRASPAPDDTDDTPQELKKSPSSPSVENSI) is disordered. Ser411 is subject to Phosphoserine. Positions 427–437 (SPSSPSVENSI) are enriched in polar residues.

Interacts with guanine-nucleotide exchange factors PSCD1, PSCD2, PSCD3 and PSCD4. Interacts (via C-terminus) with cytohesin-2 CYTH2.

It localises to the cytoplasm. The protein resides in the cell membrane. Functionally, enhances the promotion of guanine-nucleotide exchange by PSCD2 on ARF6 in a concentration-dependent manner. The protein is Interactor protein for cytohesin exchange factors 1 (IPCEF1) of Homo sapiens (Human).